A 133-amino-acid chain; its full sequence is Phosphoribosyl-AMP cyclohydrolase (133 aa).

Aspartate 82 contributes to the Mg(2+) binding site. A Zn(2+)-binding site is contributed by cysteine 83. Mg(2+) contacts are provided by aspartate 84 and aspartate 86. 2 residues coordinate Zn(2+): cysteine 99 and cysteine 106.

This sequence belongs to the PRA-CH family. In terms of assembly, homodimer. It depends on Mg(2+) as a cofactor. The cofactor is Zn(2+).

It is found in the cytoplasm. It catalyses the reaction 1-(5-phospho-beta-D-ribosyl)-5'-AMP + H2O = 1-(5-phospho-beta-D-ribosyl)-5-[(5-phospho-beta-D-ribosylamino)methylideneamino]imidazole-4-carboxamide. Its pathway is amino-acid biosynthesis; L-histidine biosynthesis; L-histidine from 5-phospho-alpha-D-ribose 1-diphosphate: step 3/9. In terms of biological role, catalyzes the hydrolysis of the adenine ring of phosphoribosyl-AMP. The chain is Phosphoribosyl-AMP cyclohydrolase from Rhodospirillum centenum (strain ATCC 51521 / SW).